A 275-amino-acid polypeptide reads, in one-letter code: tRNA-splicing endonuclease subunit SEN34 (275 aa).

Active-site residues include Tyr209, His217, and Lys250.

The protein belongs to the tRNA-intron endonuclease family. Heterotetramer composed of SEN2, SEN15, SEN34 and SEN54. Interacts directly with SEN15.

The protein localises to the nucleus. Its subcellular location is the endomembrane system. It is found in the mitochondrion outer membrane. The enzyme catalyses pretRNA = a 3'-half-tRNA molecule with a 5'-OH end + a 5'-half-tRNA molecule with a 2',3'-cyclic phosphate end + an intron with a 2',3'-cyclic phosphate and a 5'-hydroxyl terminus.. Its function is as follows. Constitutes one of the two catalytic subunit of the tRNA-splicing endonuclease complex, a complex responsible for identification and cleavage of the splice sites in pre-tRNA. It cleaves pre-tRNA at the 5'- and 3'-splice sites to release the intron. The products are an intron and two tRNA half-molecules bearing 2',3'-cyclic phosphate and 5'-OH termini. There are no conserved sequences at the splice sites, but the intron is invariably located at the same site in the gene, placing the splice sites an invariant distance from the constant structural features of the tRNA body. It probably carries the active site for 3'-splice site cleavage. This chain is tRNA-splicing endonuclease subunit SEN34 (SEN34), found in Saccharomyces cerevisiae (strain ATCC 204508 / S288c) (Baker's yeast).